Reading from the N-terminus, the 608-residue chain is MASTLDLDKGCTVEELLRGCIEAFDDSGKVRDPQLVRMFLMMHPWYIPSSQLASKLLHFYQQSRKDNSNSLQVKTCHLVRYWVSAFPAEFDLNPELAEQIKELKALLDQEGNRRHSSLIDIESVPTYKWKRQVTQRNPVEQKKRKMSLLFDHLEPMELAEHLTYLEYRSFCKILFQDYHSFVTHGCTVDNPVLERFISLFNSVSQWVQLMILSKPTATQRALVITHFVHVAEKLLQLQNFNTLMAVVGGLSHSSISRLKETHSHVSPDTIKLWEGLTELVTATGNYSNYRRRLAACVGFRFPILGVHLKDLVALQLALPDWLDPGRTRLNGAKMRQLFSILEELAMVTSLRPPVQANPDLLSLLTVSLDQYQTEDELYQLSLQREPRSKSSPTSPTSCTPPPRPPVLEEWTSVAKPKLDQALVAEHIEKMVESVFRNFDVDGDGHISQEEFQIIRGNFPYLSAFGDLDQNQDGCISREEMISYFLRSSSVLGGRMGFVHNLQESNSLRPVACRHCKALILGIYKQGLKCRACGVNCHKQCKDRLSVECRRRAQSVSLEGSAPSPSPTHTHHRAFSFSLPRPGRRSSRPPEIREEEVQTVEDGVFDIHL.

The N-terminal Ras-GEF domain occupies 4 to 126 (TLDLDKGCTV…SLIDIESVPT (123 aa)). Residues Ser116, Ser117, and Ser147 each carry the phosphoserine modification. In terms of domain architecture, Ras-GEF spans 154–387 (EPMELAEHLT…YQLSLQREPR (234 aa)). Residues 382 to 405 (LQREPRSKSSPTSPTSCTPPPRPP) form a disordered region. 2 EF-hand domains span residues 426-461 (HIEK…FPYL) and 463-490 (AFGD…SSSV). Ca(2+) is bound by residues Asp439, Asp441, Asp443, His445, Glu450, Asp468, Asn470, Asp472, Cys474, and Glu479. The Phorbol-ester/DAG-type zinc finger occupies 498–548 (VHNLQESNSLRPVACRHCKALILGIYKQGLKCRACGVNCHKQCKDRLSVEC). Phosphoserine occurs at positions 554 and 575. Residues 555–596 (VSLEGSAPSPSPTHTHHRAFSFSLPRPGRRSSRPPEIREEEV) are disordered.

Belongs to the RASGRP family. In terms of assembly, forms a signaling complex with RAP1 and BRAF. Interacts with F-actin. Interacts with RAP1. As to expression, expressed in striatal neurons (at protein level). Expressed in the hematopoietic system. Detected in olfactory structures and deep cortical layers of brain.

It is found in the cytoplasm. Its subcellular location is the cytosol. The protein resides in the cell membrane. The protein localises to the synapse. It localises to the synaptosome. It is found in the cell projection. Its subcellular location is the ruffle membrane. In terms of biological role, functions as a calcium- and DAG-regulated nucleotide exchange factor specifically activating Rap through the exchange of bound GDP for GTP. May also activate other GTPases such as RRAS, RRAS2, NRAS, KRAS but not HRAS. Functions in aggregation of platelets and adhesion of T-lymphocytes and neutrophils probably through inside-out integrin activation. May function in the muscarinic acetylcholine receptor M1/CHRM1 signaling pathway. In Rattus norvegicus (Rat), this protein is RAS guanyl-releasing protein 2 (Rasgrp2).